Consider the following 1034-residue polypeptide: Error-prone DNA polymerase (1034 aa).

Belongs to the DNA polymerase type-C family. DnaE2 subfamily.

It localises to the cytoplasm. The catalysed reaction is DNA(n) + a 2'-deoxyribonucleoside 5'-triphosphate = DNA(n+1) + diphosphate. DNA polymerase involved in damage-induced mutagenesis and translesion synthesis (TLS). It is not the major replicative DNA polymerase. The polypeptide is Error-prone DNA polymerase (Pseudomonas fluorescens (strain ATCC BAA-477 / NRRL B-23932 / Pf-5)).